The primary structure comprises 239 residues: Ribonuclease PH (239 aa).

Phosphate-binding positions include Arg-86 and 124 to 126 (GTR).

This sequence belongs to the RNase PH family. Homohexameric ring arranged as a trimer of dimers.

It catalyses the reaction tRNA(n+1) + phosphate = tRNA(n) + a ribonucleoside 5'-diphosphate. Functionally, phosphorolytic 3'-5' exoribonuclease that plays an important role in tRNA 3'-end maturation. Removes nucleotide residues following the 3'-CCA terminus of tRNAs; can also add nucleotides to the ends of RNA molecules by using nucleoside diphosphates as substrates, but this may not be physiologically important. Probably plays a role in initiation of 16S rRNA degradation (leading to ribosome degradation) during starvation. The polypeptide is Ribonuclease PH (Azoarcus sp. (strain BH72)).